The primary structure comprises 555 residues: Sesquiterpene synthase 31 (555 aa).

Mg(2+) contacts are provided by aspartate 308, aspartate 312, aspartate 451, threonine 455, and glutamate 459. The DDXXD motif motif lies at 308–312 (DDTFD).

The protein belongs to the terpene synthase family. Tpsa subfamily. Mg(2+) is required as a cofactor. The cofactor is Mn(2+). In terms of tissue distribution, expressed in stem and leaf trichomes. Detected in roots, fruits and flowers.

It is found in the cytoplasm. The catalysed reaction is (2E,6E)-farnesyl diphosphate = viridiflorene + diphosphate. Its pathway is secondary metabolite biosynthesis; terpenoid biosynthesis. Sesquiterpene synthase involved in the production of viridiflorene from (E,E)-farnesyl diphosphate (FPP). Has no activity with (Z,Z)-FPP. Can act with a low efficiency as a monoterpene synthase with geranyl diphosphate as substrate. The chain is Sesquiterpene synthase 31 from Solanum lycopersicum (Tomato).